Here is a 244-residue protein sequence, read N- to C-terminus: Phosphoadenosine 5'-phosphosulfate reductase (244 aa).

The Nucleophile; cysteine thiosulfonate intermediate role is filled by cysteine 239.

The protein belongs to the PAPS reductase family. CysH subfamily.

It is found in the cytoplasm. The enzyme catalyses [thioredoxin]-disulfide + sulfite + adenosine 3',5'-bisphosphate + 2 H(+) = [thioredoxin]-dithiol + 3'-phosphoadenylyl sulfate. Its pathway is sulfur metabolism; hydrogen sulfide biosynthesis; sulfite from sulfate: step 3/3. Catalyzes the formation of sulfite from phosphoadenosine 5'-phosphosulfate (PAPS) using thioredoxin as an electron donor. This Zymomonas mobilis subsp. mobilis (strain ATCC 31821 / ZM4 / CP4) protein is Phosphoadenosine 5'-phosphosulfate reductase.